The chain runs to 961 residues: Aconitate hydratase A (961 aa).

Positions 499, 565, and 568 each coordinate [4Fe-4S] cluster.

It belongs to the aconitase/IPM isomerase family. In terms of assembly, monomer. [4Fe-4S] cluster is required as a cofactor.

It catalyses the reaction citrate = D-threo-isocitrate. The catalysed reaction is (2S,3R)-3-hydroxybutane-1,2,3-tricarboxylate = 2-methyl-cis-aconitate + H2O. It functions in the pathway carbohydrate metabolism; tricarboxylic acid cycle; isocitrate from oxaloacetate: step 2/2. Its pathway is organic acid metabolism; propanoate degradation. Its function is as follows. Involved in the catabolism of short chain fatty acids (SCFA) via the tricarboxylic acid (TCA)(acetyl degradation route) and probably via the 2-methylcitrate cycle I (propionate degradation route). Catalyzes the reversible isomerization of citrate to isocitrate via cis-aconitate. The apo form of AcnA functions as a RNA-binding regulatory protein. Could catalyze the hydration of 2-methyl-cis-aconitate to yield (2R,3S)-2-methylisocitrate. In Mycobacterium avium, this protein is Aconitate hydratase A (acn).